Consider the following 470-residue polypeptide: Flotillin-like protein 1 (470 aa).

C35 carries the S-palmitoyl cysteine lipid modification. Residues E305–E354 adopt a coiled-coil conformation.

Belongs to the band 7/mec-2 family. Flotillin subfamily. Post-translationally, may be palmitoylated.

It is found in the cell membrane. The protein resides in the membrane. The protein localises to the caveola. In terms of biological role, may act as a scaffolding protein within caveolar membranes, functionally participating in formation of caveolae or caveolae-like vesicles. This is Flotillin-like protein 1 (FLOT1) from Arabidopsis thaliana (Mouse-ear cress).